A 36-amino-acid polypeptide reads, in one-letter code: uncharacterized protein (36 aa).

This is an uncharacterized protein from Saccharomyces cerevisiae (strain ATCC 204508 / S288c) (Baker's yeast).